Reading from the N-terminus, the 325-residue chain is Glutarate 2-hydroxylase (325 aa).

Histidine 160, aspartate 162, and histidine 292 together coordinate Fe cation.

This sequence belongs to the glutarate hydroxylase family. As to quaternary structure, homotetramer. Requires Fe(2+) as cofactor.

The enzyme catalyses glutarate + 2-oxoglutarate + O2 = (S)-2-hydroxyglutarate + succinate + CO2. The protein operates within amino-acid degradation. Acts as an alpha-ketoglutarate-dependent dioxygenase catalyzing hydroxylation of glutarate (GA) to L-2-hydroxyglutarate (L2HG). Functions in a L-lysine degradation pathway that proceeds via cadaverine, glutarate and L-2-hydroxyglutarate. This chain is Glutarate 2-hydroxylase, found in Escherichia coli O127:H6 (strain E2348/69 / EPEC).